A 360-amino-acid chain; its full sequence is Phospho-N-acetylmuramoyl-pentapeptide-transferase (360 aa).

10 helical membrane-spanning segments follow: residues 25-45 (RGIL…PWLI), 74-94 (MGGA…ADLA), 97-117 (YVWV…VDDY), 132-152 (WKYF…YMTA), 168-188 (IEIP…VGSS), 199-219 (GLAI…CYLS), 236-256 (SGEL…FLWF), 263-283 (VFMG…IAVI), 288-308 (VVLF…MIQV), and 338-358 (VIVR…ATLK).

Belongs to the glycosyltransferase 4 family. MraY subfamily. Requires Mg(2+) as cofactor.

It is found in the cell inner membrane. It catalyses the reaction UDP-N-acetyl-alpha-D-muramoyl-L-alanyl-gamma-D-glutamyl-meso-2,6-diaminopimeloyl-D-alanyl-D-alanine + di-trans,octa-cis-undecaprenyl phosphate = di-trans,octa-cis-undecaprenyl diphospho-N-acetyl-alpha-D-muramoyl-L-alanyl-D-glutamyl-meso-2,6-diaminopimeloyl-D-alanyl-D-alanine + UMP. It functions in the pathway cell wall biogenesis; peptidoglycan biosynthesis. Its function is as follows. Catalyzes the initial step of the lipid cycle reactions in the biosynthesis of the cell wall peptidoglycan: transfers peptidoglycan precursor phospho-MurNAc-pentapeptide from UDP-MurNAc-pentapeptide onto the lipid carrier undecaprenyl phosphate, yielding undecaprenyl-pyrophosphoryl-MurNAc-pentapeptide, known as lipid I. The sequence is that of Phospho-N-acetylmuramoyl-pentapeptide-transferase from Stutzerimonas stutzeri (strain A1501) (Pseudomonas stutzeri).